A 353-amino-acid chain; its full sequence is Uroporphyrinogen decarboxylase (353 aa).

Substrate is bound by residues 27–31 (RQAGR), Phe46, Asp76, Tyr152, Ser207, and His321.

This sequence belongs to the uroporphyrinogen decarboxylase family. As to quaternary structure, homodimer.

Its subcellular location is the cytoplasm. The catalysed reaction is uroporphyrinogen III + 4 H(+) = coproporphyrinogen III + 4 CO2. It participates in porphyrin-containing compound metabolism; protoporphyrin-IX biosynthesis; coproporphyrinogen-III from 5-aminolevulinate: step 4/4. Catalyzes the decarboxylation of four acetate groups of uroporphyrinogen-III to yield coproporphyrinogen-III. The polypeptide is Uroporphyrinogen decarboxylase (Listeria monocytogenes serotype 4b (strain F2365)).